A 438-amino-acid polypeptide reads, in one-letter code: 23S rRNA (uracil(1939)-C(5))-methyltransferase RlmD (438 aa).

A TRAM domain is found at 10–69; the sequence is KASVNTKHLSVDVVRLDHNGAGIAFVDKKPVFIEGALPGEKAIIQFIEQKKQFSRAKLIK. The [4Fe-4S] cluster site is built by C82, C88, C91, and C169. S-adenosyl-L-methionine is bound by residues Q272, F301, N306, E322, N349, and D370. The active-site Nucleophile is the C396.

The protein belongs to the class I-like SAM-binding methyltransferase superfamily. RNA M5U methyltransferase family. RlmD subfamily.

The enzyme catalyses uridine(1939) in 23S rRNA + S-adenosyl-L-methionine = 5-methyluridine(1939) in 23S rRNA + S-adenosyl-L-homocysteine + H(+). In terms of biological role, catalyzes the formation of 5-methyl-uridine at position 1939 (m5U1939) in 23S rRNA. In Aliivibrio fischeri (strain MJ11) (Vibrio fischeri), this protein is 23S rRNA (uracil(1939)-C(5))-methyltransferase RlmD.